The sequence spans 593 residues: ABC transporter F family member 2 (593 aa).

Residues 1 to 10 (MAKKGGKNNK) show a composition bias toward basic residues. The tract at residues 1–25 (MAKKGGKNNKSKKEVTPPTSDVEDE) is disordered. 2 ABC transporter domains span residues 53 to 294 (VKIE…VNQM) and 364 to 583 (MHFD…RDLT). Residues 85–92 (GQNGCGKS) and 399–406 (GPNGAGKS) contribute to the ATP site.

It belongs to the ABC transporter superfamily. ABCF family. EF3 subfamily.

The chain is ABC transporter F family member 2 (abcF2) from Dictyostelium discoideum (Social amoeba).